A 275-amino-acid polypeptide reads, in one-letter code: 4-hydroxy-tetrahydrodipicolinate reductase (275 aa).

Residues 13-18 (GAAGKM) and 108-110 (GTT) each bind NAD(+). His-164 serves as the catalytic Proton donor/acceptor. His-165 serves as a coordination point for (S)-2,3,4,5-tetrahydrodipicolinate. The active-site Proton donor is Lys-168. A (S)-2,3,4,5-tetrahydrodipicolinate-binding site is contributed by 174 to 175 (GT).

It belongs to the DapB family.

It localises to the cytoplasm. The enzyme catalyses (S)-2,3,4,5-tetrahydrodipicolinate + NAD(+) + H2O = (2S,4S)-4-hydroxy-2,3,4,5-tetrahydrodipicolinate + NADH + H(+). The catalysed reaction is (S)-2,3,4,5-tetrahydrodipicolinate + NADP(+) + H2O = (2S,4S)-4-hydroxy-2,3,4,5-tetrahydrodipicolinate + NADPH + H(+). The protein operates within amino-acid biosynthesis; L-lysine biosynthesis via DAP pathway; (S)-tetrahydrodipicolinate from L-aspartate: step 4/4. Functionally, catalyzes the conversion of 4-hydroxy-tetrahydrodipicolinate (HTPA) to tetrahydrodipicolinate. The chain is 4-hydroxy-tetrahydrodipicolinate reductase from Acaryochloris marina (strain MBIC 11017).